The following is a 394-amino-acid chain: Phosphoglycerate kinase (394 aa).

Residues 21–23 (DFN), R36, 59–62 (HLGR), R118, and R151 contribute to the substrate site. The residue at position 183 (S183) is a Phosphoserine. Positions 201 and 292 each coordinate ATP. T299 is modified (phosphothreonine). ATP is bound by residues E323 and 350–353 (GGDS).

The protein belongs to the phosphoglycerate kinase family. As to quaternary structure, monomer.

It is found in the cytoplasm. It carries out the reaction (2R)-3-phosphoglycerate + ATP = (2R)-3-phospho-glyceroyl phosphate + ADP. The protein operates within carbohydrate degradation; glycolysis; pyruvate from D-glyceraldehyde 3-phosphate: step 2/5. In Bacillus cereus (strain G9842), this protein is Phosphoglycerate kinase.